The sequence spans 667 residues: Bicarbonate transport ATP-binding protein CmpC (667 aa).

Residues 5-239 form the ABC transporter domain; sequence VAVDNIDKVF…RPRKRMEVVE (235 aa). 42–49 contributes to the ATP binding site; it reads GHSGCGKS. The tract at residues 281–667 is cmpA-like; it reads LELGYVPLVA…DNPTPAPVFA (387 aa).

This sequence belongs to the ABC transporter superfamily. Nitrate/nitrite/cyanate uptake transporter (NitT) (TC 3.A.1.16) family. As to quaternary structure, the complex is composed of two ATP-binding proteins (CmpC and CmpD), a transmembrane protein (CmpB) and a solute-binding protein (CmpA).

Its subcellular location is the cell inner membrane. Part of the ABC transporter complex CmpABCD involved in bicarbonate transport. Responsible for energy coupling to the transport system. In Synechocystis sp. (strain ATCC 27184 / PCC 6803 / Kazusa), this protein is Bicarbonate transport ATP-binding protein CmpC (cmpC).